Here is an 857-residue protein sequence, read N- to C-terminus: Aminopeptidase N (857 aa).

Substrate-binding positions include E130 and G264–N268. H298 lines the Zn(2+) pocket. The active-site Proton acceptor is the E299. Zn(2+)-binding residues include H302 and E321.

This sequence belongs to the peptidase M1 family. In terms of assembly, monomer. It depends on Zn(2+) as a cofactor. The N-terminus is blocked.

It localises to the cytoplasm. The catalysed reaction is Release of an N-terminal amino acid, Xaa-|-Yaa- from a peptide, amide or arylamide. Xaa is preferably Ala, but may be most amino acids including Pro (slow action). When a terminal hydrophobic residue is followed by a prolyl residue, the two may be released as an intact Xaa-Pro dipeptide.. In terms of biological role, aminopeptidase with broad substrate specificity to several peptides. Shows strong preference for leucine but also cleaves next to Arg and Lys in peptide-bond-containing substrates. This chain is Aminopeptidase N (pepN), found in Streptomyces lividans.